Here is a 168-residue protein sequence, read N- to C-terminus: Lipoprotein signal peptidase (168 aa).

A run of 4 helical transmembrane segments spans residues 15–35, 47–67, 75–95, and 107–127; these read WLWL…IVME, VLPF…SFLS, WLFT…MSKL, and AMII…GFVV. Catalysis depends on residues Asp128 and Asp146. A helical transmembrane segment spans residues 141-161; it reads AFNLADTAICLGAAMIILDGF.

The protein belongs to the peptidase A8 family.

It localises to the cell inner membrane. It carries out the reaction Release of signal peptides from bacterial membrane prolipoproteins. Hydrolyzes -Xaa-Yaa-Zaa-|-(S,diacylglyceryl)Cys-, in which Xaa is hydrophobic (preferably Leu), and Yaa (Ala or Ser) and Zaa (Gly or Ala) have small, neutral side chains.. Its pathway is protein modification; lipoprotein biosynthesis (signal peptide cleavage). This protein specifically catalyzes the removal of signal peptides from prolipoproteins. This is Lipoprotein signal peptidase from Vibrio vulnificus (strain CMCP6).